The primary structure comprises 320 residues: ATP-dependent 6-phosphofructokinase (320 aa).

Gly12 serves as a coordination point for ATP. Residues 22-26 (RGVVR) and 55-60 (RYSVSD) contribute to the ADP site. Residues 73 to 74 (RF) and 103 to 106 (GDGS) contribute to the ATP site. Residue Asp104 participates in Mg(2+) binding. 126–128 (TID) serves as a coordination point for substrate. Asp128 acts as the Proton acceptor in catalysis. Arg155 provides a ligand contact to ADP. Residues Arg163 and 170 to 172 (MGR) contribute to the substrate site. ADP contacts are provided by residues 186-188 (GCE), Lys212, and 214-216 (KKH). Substrate-binding positions include Glu223, Arg244, and 250–253 (HIQR).

It belongs to the phosphofructokinase type A (PFKA) family. ATP-dependent PFK group I subfamily. Prokaryotic clade 'B1' sub-subfamily. As to quaternary structure, homotetramer. The cofactor is Mg(2+).

Its subcellular location is the cytoplasm. It catalyses the reaction beta-D-fructose 6-phosphate + ATP = beta-D-fructose 1,6-bisphosphate + ADP + H(+). The protein operates within carbohydrate degradation; glycolysis; D-glyceraldehyde 3-phosphate and glycerone phosphate from D-glucose: step 3/4. Allosterically activated by ADP and other diphosphonucleosides, and allosterically inhibited by phosphoenolpyruvate. Functionally, catalyzes the phosphorylation of D-fructose 6-phosphate to fructose 1,6-bisphosphate by ATP, the first committing step of glycolysis. This is ATP-dependent 6-phosphofructokinase from Sodalis glossinidius (strain morsitans).